We begin with the raw amino-acid sequence, 153 residues long: Protein-export protein SecB (153 aa).

The protein belongs to the SecB family. In terms of assembly, homotetramer, a dimer of dimers. One homotetramer interacts with 1 SecA dimer.

It is found in the cytoplasm. In terms of biological role, one of the proteins required for the normal export of preproteins out of the cell cytoplasm. It is a molecular chaperone that binds to a subset of precursor proteins, maintaining them in a translocation-competent state. It also specifically binds to its receptor SecA. In Erwinia tasmaniensis (strain DSM 17950 / CFBP 7177 / CIP 109463 / NCPPB 4357 / Et1/99), this protein is Protein-export protein SecB.